The primary structure comprises 306 residues: Bifunctional protein FolD 1 (306 aa).

NADP(+)-binding positions include 168-170, Ser-193, and Ile-234; that span reads GRS.

This sequence belongs to the tetrahydrofolate dehydrogenase/cyclohydrolase family. As to quaternary structure, homodimer.

The catalysed reaction is (6R)-5,10-methylene-5,6,7,8-tetrahydrofolate + NADP(+) = (6R)-5,10-methenyltetrahydrofolate + NADPH. It catalyses the reaction (6R)-5,10-methenyltetrahydrofolate + H2O = (6R)-10-formyltetrahydrofolate + H(+). Its pathway is one-carbon metabolism; tetrahydrofolate interconversion. In terms of biological role, catalyzes the oxidation of 5,10-methylenetetrahydrofolate to 5,10-methenyltetrahydrofolate and then the hydrolysis of 5,10-methenyltetrahydrofolate to 10-formyltetrahydrofolate. This Rhizobium meliloti (strain 1021) (Ensifer meliloti) protein is Bifunctional protein FolD 1.